Consider the following 115-residue polypeptide: Vespryn (115 aa).

A signal peptide spans 1–15; it reads MTWLLLCLLAQYENG. A B30.2/SPRY domain is found at 22–115; sequence SSSAKPYKTS…VKRKDHLRLT (94 aa).

This sequence belongs to the ohanin/vespryn family. Expressed by the venom gland.

It localises to the secreted. Neurotoxin that produces dose-dependent hypolocomotion and hyperalgesia in mice. May directly act on the central nervous system, as it is 6500-fold more potent when administered intracerebroventricularly than intraperitoneal. This Pogona barbata (Bearded dragon) protein is Vespryn.